A 132-amino-acid chain; its full sequence is Large-conductance mechanosensitive channel (132 aa).

2 helical membrane passes run 11–31 and 75–95; these read FISR…GAFG and GSFL…FLLV.

It belongs to the MscL family. As to quaternary structure, homopentamer.

The protein localises to the cell inner membrane. Its function is as follows. Channel that opens in response to stretch forces in the membrane lipid bilayer. May participate in the regulation of osmotic pressure changes within the cell. This chain is Large-conductance mechanosensitive channel, found in Synechococcus sp. (strain JA-3-3Ab) (Cyanobacteria bacterium Yellowstone A-Prime).